Here is a 107-residue protein sequence, read N- to C-terminus: Thioredoxin (107 aa).

A Thioredoxin domain is found at 2 to 107; that stretch reads DSIVHVTDDS…QLTAFLDSNX (106 aa). C32 and C35 are joined by a disulfide.

The protein belongs to the thioredoxin family.

Functionally, participates in various redox reactions through the reversible oxidation of its active center dithiol to a disulfide and catalyzes dithiol-disulfide exchange reactions. The chain is Thioredoxin (trxA) from Allochromatium vinosum (Chromatium vinosum).